Reading from the N-terminus, the 261-residue chain is RING finger and CHY zinc finger domain-containing protein 1 (261 aa).

Residues 13–80 form a CHY-type zinc finger; the sequence is LAQGPRGCEH…AQQTCEDCST (68 aa). The Zn(2+) site is built by Cys20, His22, Cys33, Cys34, Cys40, Cys43, His44, His50, Cys62, Cys65, Cys75, Cys78, Cys87, Cys90, His101, Cys102, Cys105, Cys108, His118, Cys119, Cys122, Cys125, His134, and Cys136. A CTCHY-type zinc finger spans residues 82–144; it reads FGEYYCSICH…KCIENVSRQN (63 aa). Residues 145-189 form an RING-type zinc finger; sequence CPICLEDIHTSRVVAHVLPCGHLLHRTCYEEMLKEGYRCPLCMHS.

Monomer and homodimer. Interacts with AR, MDM2, KAT5, PLAG1, PLAGL2, COPE, UBE2D2 and GORAB/NTKLBP1. In terms of processing, subject to ubiquitination and proteasomal degradation. Interaction with PLAGL2 or KAT5 enhances protein stability. In terms of tissue distribution, detected in testis, liver, kidney and heart.

Its subcellular location is the nucleus. It is found in the nucleus speckle. The protein localises to the cytoplasm. It catalyses the reaction S-ubiquitinyl-[E2 ubiquitin-conjugating enzyme]-L-cysteine + [acceptor protein]-L-lysine = [E2 ubiquitin-conjugating enzyme]-L-cysteine + N(6)-ubiquitinyl-[acceptor protein]-L-lysine.. It functions in the pathway protein modification; protein ubiquitination. Functionally, E3 ubiquitin-protein ligase that mediates ubiquitination of target proteins, including p53/TP53, TP73, HDAC1 and CDKN1B. Mediates ubiquitination and degradation of p53/TP53; preferentially acts on tetrameric p53/TP53. Catalyzes monoubiquitinates the translesion DNA polymerase POLH. Involved in the ribosome-associated quality control (RQC) pathway, which mediates the extraction of incompletely synthesized nascent chains from stalled ribosomes: RCHY1 acts downstream of NEMF and recognizes CAT tails associated with stalled nascent chains, leading to their ubiquitination and degradation. This chain is RING finger and CHY zinc finger domain-containing protein 1 (Rchy1), found in Mus musculus (Mouse).